A 54-amino-acid chain; its full sequence is Metallothionein-4 (54 aa).

Belongs to the metallothionein superfamily. Type 11 family.

In Yarrowia lipolytica (strain CLIB 122 / E 150) (Yeast), this protein is Metallothionein-4 (MTP4).